A 454-amino-acid chain; its full sequence is CCA-adding enzyme (454 aa).

Residues Ser59 and Arg62 each coordinate ATP. CTP-binding residues include Ser59 and Arg62. 3 residues coordinate Mg(2+): Asp71, Asp73, and Asp125. ATP-binding residues include His148, Lys167, and Tyr176. His148, Lys167, and Tyr176 together coordinate CTP.

It belongs to the tRNA nucleotidyltransferase/poly(A) polymerase family. Archaeal CCA-adding enzyme subfamily. As to quaternary structure, homodimer. Requires Mg(2+) as cofactor.

It catalyses the reaction a tRNA precursor + 2 CTP + ATP = a tRNA with a 3' CCA end + 3 diphosphate. The enzyme catalyses a tRNA with a 3' CCA end + 2 CTP + ATP = a tRNA with a 3' CCACCA end + 3 diphosphate. Functionally, catalyzes the addition and repair of the essential 3'-terminal CCA sequence in tRNAs without using a nucleic acid template. Adds these three nucleotides in the order of C, C, and A to the tRNA nucleotide-73, using CTP and ATP as substrates and producing inorganic pyrophosphate. tRNA 3'-terminal CCA addition is required both for tRNA processing and repair. Also involved in tRNA surveillance by mediating tandem CCA addition to generate a CCACCA at the 3' terminus of unstable tRNAs. While stable tRNAs receive only 3'-terminal CCA, unstable tRNAs are marked with CCACCA and rapidly degraded. This Methanosarcina mazei (strain ATCC BAA-159 / DSM 3647 / Goe1 / Go1 / JCM 11833 / OCM 88) (Methanosarcina frisia) protein is CCA-adding enzyme.